A 279-amino-acid chain; its full sequence is Armadillo repeat-containing protein 1 (279 aa).

One copy of the ARM repeat lies at 36-78 (GCLPGLILFLDHPSPPVVHSALLALRYLAECRANREKMKGELG). Residues 236–257 (EYLPEDESPSKEQDKAVSRVGS) form a disordered region. The span at 243 to 252 (SPSKEQDKAV) shows a compositional bias: basic and acidic residues.

Interacts with mitochondrial contact site and cristae organizing system (MICOS) complex components IMMT/MIC60 and MICOS10/MIC10. Interacts with mitochondrial outer membrane sorting assembly machinery (SAM) complex components SAMM50 and MTX1.

The protein localises to the cytoplasm. Its subcellular location is the mitochondrion. The protein resides in the mitochondrion outer membrane. Functionally, in association with mitochondrial contact site and cristae organizing system (MICOS) complex components and mitochondrial outer membrane sorting assembly machinery (SAM) complex components may regulate mitochondrial dynamics playing a role in determining mitochondrial length, distribution and motility. The polypeptide is Armadillo repeat-containing protein 1 (ARMC1) (Gallus gallus (Chicken)).